Here is a 210-residue protein sequence, read N- to C-terminus: Thymidylate kinase (210 aa).

DGMP is bound at residue aspartate 17. Residue aspartate 17 participates in dTMP binding. Residues arginine 18, serine 19, glycine 20, lysine 21, serine 22, and threonine 23 each contribute to the ATP site. Positions 47, 74, 78, 99, and 107 each coordinate dTMP. The dGMP site is built by phenylalanine 74, arginine 78, arginine 99, tyrosine 107, serine 108, and tyrosine 153. An LID region spans residues 143 to 155 (QNRSDYGEEIYEK). Arginine 182 provides a ligand contact to ATP.

It belongs to the thymidylate kinase family. In terms of assembly, homodimer. Binds two dTMP molecules per dimer. Binds only one dTGP molecule per dimer.

It catalyses the reaction dTMP + ATP = dTDP + ADP. It carries out the reaction dGMP + ATP = dGDP + ADP. The protein operates within pyrimidine metabolism; dTTP biosynthesis. With respect to regulation, inhibited by deoxyguanosine (dG), deoxythymidine (dT) and azidothymidine (AZT). Functionally, catalyzes the phosphorylation of thymidine monophosphate (dTMP) to thymidine diphosphate (dTDP), the immediate precursor for the DNA building block dTTP. Can also phosphorylate dGMP and to a lesser extent GMP, dUMP and dIMP. Can use either ATP or dATP as phosphate donors in presence of Mg(2+). This chain is Thymidylate kinase, found in Plasmodium falciparum (isolate 3D7).